The following is a 426-amino-acid chain: Glutamate-1-semialdehyde 2,1-aminomutase (426 aa).

Lysine 265 is subject to N6-(pyridoxal phosphate)lysine.

Belongs to the class-III pyridoxal-phosphate-dependent aminotransferase family. HemL subfamily. Homodimer. The cofactor is pyridoxal 5'-phosphate.

Its subcellular location is the cytoplasm. It catalyses the reaction (S)-4-amino-5-oxopentanoate = 5-aminolevulinate. It functions in the pathway porphyrin-containing compound metabolism; protoporphyrin-IX biosynthesis; 5-aminolevulinate from L-glutamyl-tRNA(Glu): step 2/2. The protein is Glutamate-1-semialdehyde 2,1-aminomutase of Paraburkholderia phymatum (strain DSM 17167 / CIP 108236 / LMG 21445 / STM815) (Burkholderia phymatum).